Reading from the N-terminus, the 574-residue chain is Developmental and secondary metabolism regulator veA (574 aa).

4 disordered regions span residues 1–22 (MATR…SRIT), 39–60 (ERAR…VDPP), 255–500 (RSSD…GAGK), and 513–540 (RSYE…YPRR). Residues 25–230 (GKKLTYKLNV…AEQGCRVRIR (206 aa)) form the Velvet domain. The Nuclear localization signal motif lies at 39–44 (ERARAC). Composition is skewed to pro residues over residues 314–323 (RPLPPAPGPA) and 330–341 (PAPPAPPAPPSH). Composition is skewed to polar residues over residues 343 to 353 (PGYQSHLSFGS), 385 to 394 (HARNPSTSAE), 406 to 415 (RMSTERSSYP), and 448 to 458 (VAQSAAPRSQT). The segment at 457–498 (QTPSSSLVPSLPPLKALSGDYPNNLSQSSSSTSQSPSHDLGA) is PEST. Low complexity-rich tracts occupy residues 459–474 (PSSS…KALS) and 482–493 (SQSSSSTSQSPS). Positions 513–525 (RSYEDSFGHDDRP) are enriched in basic and acidic residues.

This sequence belongs to the velvet family. VeA subfamily. In terms of assembly, component of the heterotrimeric velvet complex composed of laeA, veA and velB; VeA acting as a bridging protein between laeA and velB.

Its subcellular location is the nucleus. It localises to the cytoplasm. In terms of biological role, component of the velvet transcription factor complex that controls sexual/asexual developmental ratio in response to light, promoting sexual development in the darkness while stimulating asexual sporulation under illumination. The velvet complex hat acts as a global regulator for secondary metabolite gene expression. Controls the expression of the cyclopiazonic acid, aflatrem, and aflatoxin gene clusters. Controls the expression of the sclerotium-specific pigment asparasone A gene cluster. Controls the expression of the aflavarin gene cluster. also controls the production of hydrolases and other extracellular proteins during growth on natural starch-based substrates. Regulates genes involved in the High Osmolarity Glycerol (HOG) signaling pathway. Required for the conidial and sclerotial density-dependent production. The sequence is that of Developmental and secondary metabolism regulator veA from Aspergillus flavus (strain ATCC 200026 / FGSC A1120 / IAM 13836 / NRRL 3357 / JCM 12722 / SRRC 167).